The sequence spans 1032 residues: Argonaute protein hrde-1 (1032 aa).

2 disordered regions span residues 1–51 and 298–375; these read MADL…PIGR and KLSE…YSPS. Residues 1–551 are required to recruit the small-RNA amplification machinery to gene targets and promote gene silencing; sequence MADLLDKIMG…IQMTAKLLPP (551 aa). Positions 18–33 are enriched in basic and acidic residues; that stretch reads PKRDNRMNQDKDEPTS. The span at 303 to 313 shows a compositional bias: gly residues; the sequence is KGGGGGRGGYG. Basic and acidic residues-rich tracts occupy residues 315–335 and 343–364; these read SDSR…RDFR and GNDR…RRDS. One can recognise a PAZ domain in the interval 376–481; sequence DAAELEHAFG…FPMELLRIAP (106 aa). Residues 650–977 enclose the Piwi domain; sequence DILVGIAREK…LAKRGRNNYK (328 aa).

Belongs to the argonaute family. WAGO subfamily. In terms of tissue distribution, expressed in the nuclei of male and female germ cells.

The protein localises to the cytoplasm. Its subcellular location is the cytoplasmic ribonucleoprotein granule. It localises to the nucleus. Argonaute protein which is involved in the endogenous small interfering RNA (endo-siRNA) pathway and is required for RNA-mediated gene silencing (RNAi) in the germline. Interacts with secondary 22G-RNAs in an hrde-2-dependent manner; 22G-RNAs are RNA-dependent RNA polymerase-derived endo-siRNAs, typically 22 nucleotides in length with a 5'-guanosine residue. Plays a key role in transgenerational epigenetic inheritance and germline immortality. May be involved in transgenerational gene silencing both by inducing subnuclear-co-localization of target genes into heterochromatin and by activation of small RNA amplification in the nuage. This Caenorhabditis elegans protein is Argonaute protein hrde-1.